Here is a 37-residue protein sequence, read N- to C-terminus: Large ribosomal subunit protein bL36 (37 aa).

This sequence belongs to the bacterial ribosomal protein bL36 family.

The sequence is that of Large ribosomal subunit protein bL36 (rpmJ) from Oleidesulfovibrio alaskensis (strain ATCC BAA-1058 / DSM 17464 / G20) (Desulfovibrio alaskensis).